An 811-amino-acid chain; its full sequence is Myb-like DNA-binding protein BAS1 (811 aa).

Residues 34-110 form the Myb-like domain; it reads HRKNGRNSWS…DVRKRWTGSL (77 aa). 2 HTH myb-type domains span residues 111–165 and 166–218; these read DPNL…GPGS and KGRL…TMVV. 2 DNA-binding regions (H-T-H motif) span residues 138–161 and 191–214; these read WLSISMDIPGRTEDQCAKRYIEVL and WRKISSEMEFRPSLTCRNRWRKII. Basic and acidic residues predominate over residues 237-264; sequence DMTDGKLRQHPIADSDIRSDSTPNKEEQ. 4 disordered regions span residues 237–320, 348–379, 535–713, and 782–811; these read DMTD…SAPP, SQMNKQSPGGISDSPQTSLPPAFNPASLDEHM, ATSH…LRDE, and LHNEAKKTSEHDMTSGGSTDNGSVLPLNPS. Over residues 265–275 the composition is skewed to low complexity; it reads LQLSQQNNPSL. Basic and acidic residues predominate over residues 282–298; that stretch reads NVKENESSKLPRLKDND. Composition is skewed to polar residues over residues 348-366, 535-613, and 653-664; these read SQMNKQSPGGISDSPQTSL, ATSH…TSGS, and LNPSPNSVRSNG. The span at 782-794 shows a compositional bias: basic and acidic residues; it reads LHNEAKKTSEHDM.

Monomer.

The protein resides in the nucleus. Activates HIS4 transcription only in combination with PHO2/BAS2. BAS1 is also involved in the regulation of the purine biosynthesis pathway. The polypeptide is Myb-like DNA-binding protein BAS1 (BAS1) (Saccharomyces cerevisiae (strain ATCC 204508 / S288c) (Baker's yeast)).